A 283-amino-acid polypeptide reads, in one-letter code: MSSDDTTDPTADDESFTDSPVAGLEQSTTTRGSGRTVISARNINVWYNETQALSDITMDIPEQEVTALIGPSGCGKSTFLRCINRMNDRIDACRIEGELELHGKNVYDEDVDPVALRRKVGMVFQKPNPFPKSIYDNVAYGLKIQGYDGDIDARVEEALRGAALWDEVNDQLDESGLELSGGQQQRLCIARAIAPDPEVVLMDEPTSALDPVAASKVEDLIDELVEDYTVVIVTHNMQQAARISDKTAVFLTGGELVEFDDTASVFENPSSERVENYITGKFG.

The segment covering 1 to 16 (MSSDDTTDPTADDESF) has biased composition (acidic residues). Residues 1–35 (MSSDDTTDPTADDESFTDSPVAGLEQSTTTRGSGR) are disordered. The 241-residue stretch at 38–278 (ISARNINVWY…PSSERVENYI (241 aa)) folds into the ABC transporter domain. 70–77 (GPSGCGKS) lines the ATP pocket.

The protein belongs to the ABC transporter superfamily. Phosphate importer (TC 3.A.1.7) family. As to quaternary structure, the complex is composed of two ATP-binding proteins (PstB), two transmembrane proteins (PstC and PstA) and a solute-binding protein (PstS).

It is found in the cell membrane. The catalysed reaction is phosphate(out) + ATP + H2O = ADP + 2 phosphate(in) + H(+). Part of the ABC transporter complex PstSACB involved in phosphate import. Responsible for energy coupling to the transport system. The sequence is that of Phosphate import ATP-binding protein PstB 1 from Natronomonas pharaonis (strain ATCC 35678 / DSM 2160 / CIP 103997 / JCM 8858 / NBRC 14720 / NCIMB 2260 / Gabara) (Halobacterium pharaonis).